A 414-amino-acid chain; its full sequence is MGLKKFLEDIEHHFEPGGKHEKWFALYEAAATLFYTPGLVTKRSSHVRDSVDLKRIMIMVWLAVFPAMFWGMYNVGHQSITALNHLYSGAELATVISGNWHYWLTEMLGGTLSTQAGWASMMLLGATYFLPIYATVFLVGGFWEVLFCMVRKHEVNEGFFVTSILFALIVPPTLPLWQAALGITFGVVVAKEIFGGTGRNFLNPALAGRAFLFFAYPAQISGDVVWTAADGFSGATALSQWAQGGNGALINKVTGEAITWMDAFVGNIPGSIGEVSTLALAIGAAFIVYMGIASWRIIAGVMVGMIAISTLFNVIGSDTNAMFNMPWHWHLVLGGFAFGMFFMATDPVSASFTNKGKWAYGILIGAMCVMIRVVNPAYPEGMMLAILFANLFAPLFDHIVIEKNIKRRLARYGK.

Helical transmembrane passes span 56-76 (IMIMVWLAVFPAMFWGMYNVG), 82-104 (ALNHLYSGAELATVISGNWHYWL), 129-149 (FLPIYATVFLVGGFWEVLFCM), and 164-184 (ILFALIVPPTLPLWQAALGIT). The residue at position 236 (Thr236) is an FMN phosphoryl threonine. Helical transmembrane passes span 275-295 (VSTLALAIGAAFIVYMGIASW), 297-317 (IIAGVMVGMIAISTLFNVIGS), 325-345 (MPWHWHLVLGGFAFGMFFMAT), 358-378 (WAYGILIGAMCVMIRVVNPAY), and 381-401 (GMMLAILFANLFAPLFDHIVI).

It belongs to the NqrB/RnfD family. As to quaternary structure, composed of six subunits; NqrA, NqrB, NqrC, NqrD, NqrE and NqrF. It depends on FMN as a cofactor.

It is found in the cell inner membrane. It carries out the reaction a ubiquinone + n Na(+)(in) + NADH + H(+) = a ubiquinol + n Na(+)(out) + NAD(+). NQR complex catalyzes the reduction of ubiquinone-1 to ubiquinol by two successive reactions, coupled with the transport of Na(+) ions from the cytoplasm to the periplasm. NqrA to NqrE are probably involved in the second step, the conversion of ubisemiquinone to ubiquinol. This is Na(+)-translocating NADH-quinone reductase subunit B from Vibrio anguillarum (Listonella anguillarum).